The chain runs to 82 residues: Turripeptide Gsp9.2 (82 aa).

Positions 1–23 are cleaved as a signal peptide; it reads MMAKLMITVMMVLLLSLQQGADG. A propeptide spanning residues 24–46 is cleaved from the precursor; that stretch reads RSERWRKNQMAASSIMRNLITAR. Residues Pro49 and Pro50 each carry the 4-hydroxyproline modification. Intrachain disulfides connect Cys53–Cys68, Cys58–Cys72, and Cys64–Cys79. 4-carboxyglutamate is present on Glu56.

The protein belongs to the Pg turripeptide superfamily. In terms of tissue distribution, expressed by the venom duct.

Its subcellular location is the secreted. This chain is Turripeptide Gsp9.2, found in Gemmula speciosa (Splendid gem-turris).